The following is a 130-amino-acid chain: DNA-directed RNA polymerase subunit omega (130 aa).

A disordered region spans residues 110-130 (EELLKGLEGLAPPEEQPEEDE).

Belongs to the RNA polymerase subunit omega family. As to quaternary structure, the RNAP catalytic core consists of 2 alpha, 1 beta, 1 beta' and 1 omega subunit. When a sigma factor is associated with the core the holoenzyme is formed, which can initiate transcription.

It carries out the reaction RNA(n) + a ribonucleoside 5'-triphosphate = RNA(n+1) + diphosphate. In terms of biological role, promotes RNA polymerase assembly. Latches the N- and C-terminal regions of the beta' subunit thereby facilitating its interaction with the beta and alpha subunits. The sequence is that of DNA-directed RNA polymerase subunit omega from Bradyrhizobium sp. (strain BTAi1 / ATCC BAA-1182).